We begin with the raw amino-acid sequence, 446 residues long: Phosphoglucosamine mutase (446 aa).

Residue Ser-103 is the Phosphoserine intermediate of the active site. Mg(2+) is bound by residues Ser-103, Asp-242, Asp-244, and Asp-246. Position 103 is a phosphoserine (Ser-103).

The protein belongs to the phosphohexose mutase family. Mg(2+) serves as cofactor. Post-translationally, activated by phosphorylation.

It carries out the reaction alpha-D-glucosamine 1-phosphate = D-glucosamine 6-phosphate. In terms of biological role, catalyzes the conversion of glucosamine-6-phosphate to glucosamine-1-phosphate. The chain is Phosphoglucosamine mutase from Vibrio cholerae serotype O1 (strain ATCC 39315 / El Tor Inaba N16961).